The following is a 420-amino-acid chain: UDP-glucuronic acid decarboxylase 1 (420 aa).

The residue at position 1 (Met-1) is an N-acetylmethionine. Residues 1 to 19 (MVSKGLLRLVSSVNRRRMK) lie on the Cytoplasmic side of the membrane. Residues 20 to 40 (LLLGIALFAYAASVWGNFVNM) traverse the membrane as a helical; Signal-anchor for type II membrane protein segment. Topologically, residues 41–420 (RSIQENGELK…RVKKGRTRHS (380 aa)) are lumenal. A Phosphothreonine modification is found at Thr-94. NAD(+) contacts are provided by Gly-98, Phe-99, Val-100, Asp-119, Asn-120, Phe-122, Thr-123, Gly-124, Asp-144, and Val-145. Leu-149 and Tyr-150 together coordinate UDP-alpha-D-glucuronate. Leu-159 and Ser-161 together coordinate NAD(+). Lys-177 is a UDP-alpha-D-glucuronate binding site. Thr-178 provides a ligand contact to NAD(+). Asn-185, Gly-188, Lys-191, and Arg-192 together coordinate UDP-alpha-D-glucuronate. 3 residues coordinate NAD(+): Ala-200, Tyr-231, and Lys-235. Tyr-231 acts as the Proton acceptor in catalysis. Positions 245, 248, and 249 each coordinate UDP-alpha-D-glucuronate. Positions 261, 267, and 272 each coordinate NAD(+). Asn-316 is a glycosylation site (N-linked (GlcNAc...) asparagine).

Belongs to the NAD(P)-dependent epimerase/dehydratase family. UDP-glucuronic acid decarboxylase subfamily. In terms of assembly, homodimer and homotetramer. Interacts with AKT1. Requires NAD(+) as cofactor.

It localises to the golgi apparatus. The protein resides in the golgi stack membrane. The catalysed reaction is UDP-alpha-D-glucuronate + H(+) = UDP-alpha-D-xylose + CO2. It functions in the pathway nucleotide-sugar biosynthesis; UDP-alpha-D-xylose biosynthesis; UDP-alpha-D-xylose from UDP-alpha-D-glucuronate: step 1/1. In terms of biological role, catalyzes the NAD-dependent decarboxylation of UDP-glucuronic acid to UDP-xylose. Necessary for the biosynthesis of the core tetrasaccharide in glycosaminoglycan biosynthesis. The protein is UDP-glucuronic acid decarboxylase 1 (Uxs1) of Mus musculus (Mouse).